The primary structure comprises 380 residues: MLVIPPGLSEEEEALQKKFNKLKKKKKALLALKKQSSSSTTSQGGVKRSLSEQPVMDTATATEQAKQLVKSGAISAIKAETKNSGFKRSRTLEGKLKDPEKGPVPTFQPFQRSISADDDLQESSRRPQRKSLYESFVSSSDRLRELGPDGEEAEGPGAGDGPPRSFDWGYEERSGAHSSASPPRSRSRDRSHERNRDRDRDRERDRDRDRDRDRERDRDRDRDRDRDRERDRDRERDRDRDREGPFRRSDSFPERRAPRKGNTLYVYGEDMTPTLLRGAFSPFGNIIDLSMDPPRNCAFVTYEKMESADQAVAELNGTQVESVQLKVNIARKQPMLDAATGKSVWGSLAVQNSPKGCHRDKRTQIVYSDDVYKENLVDGF.

Residues 7–36 (GLSEEEEALQKKFNKLKKKKKALLALKKQS) adopt a coiled-coil conformation. The span at 30–43 (LALKKQSSSSTTSQ) shows a compositional bias: low complexity. The disordered stretch occupies residues 30 to 67 (LALKKQSSSSTTSQGGVKRSLSEQPVMDTATATEQAKQ). Residue serine 51 is modified to Phosphoserine. Lysine 78 participates in a covalent cross-link: Glycyl lysine isopeptide (Lys-Gly) (interchain with G-Cter in SUMO1); alternate. A Glycyl lysine isopeptide (Lys-Gly) (interchain with G-Cter in SUMO2); alternate cross-link involves residue lysine 78. A disordered region spans residues 79–258 (AETKNSGFKR…SDSFPERRAP (180 aa)). Lysine 82 participates in a covalent cross-link: Glycyl lysine isopeptide (Lys-Gly) (interchain with G-Cter in SUMO2). The segment covering 90 to 101 (RTLEGKLKDPEK) has biased composition (basic and acidic residues). A phosphoserine mark is found at serine 113 and serine 115. At glutamate 122 the chain carries PolyADP-ribosyl glutamic acid. A phosphoserine mark is found at serine 131 and serine 139. Residue glutamate 151 is modified to PolyADP-ribosyl glutamic acid. Phosphoserine is present on serine 165. A PolyADP-ribosyl glutamic acid modification is found at glutamate 172. Serine 179 carries the post-translational modification Phosphoserine. Residues serine 181, serine 185, and serine 187 each carry the phosphoserine; by CDK9 modification. 4 consecutive repeat copies span residues 184 to 185 (RS), 186 to 187 (RS), 188 to 189 (RD), and 190 to 191 (RS). A 30 X 2 AA approximate tandem repeats of R-[DSNE] region spans residues 184–243 (RSRSRDRSHERNRDRDRDRERDRDRDRDRDRERDRDRDRDRDRDRERDRDRERDRDRDRE). Basic and acidic residues predominate over residues 186 to 256 (RSRDRSHERN…RRSDSFPERR (71 aa)). Serine 191 carries the post-translational modification Phosphoserine; by CDK9. Residues 192 to 193 (HE) form a 5; approximate repeat. Tandem repeats lie at residues 194 to 195 (RN), 196 to 197 (RD), 198 to 199 (RD), 200 to 201 (RD), 202 to 203 (RE), 204 to 205 (RD), 206 to 207 (RD), 208 to 209 (RD), 210 to 211 (RD), 212 to 213 (RD), 214 to 215 (RE), 216 to 217 (RD), 218 to 219 (RD), 220 to 221 (RD), 222 to 223 (RD), 224 to 225 (RD), 226 to 227 (RD), 228 to 229 (RE), 230 to 231 (RD), 232 to 233 (RD), 234 to 235 (RE), 236 to 237 (RD), 238 to 239 (RD), 240 to 241 (RD), and 242 to 243 (RE). Phosphoserine is present on residues serine 249 and serine 251. Positions 262–332 (NTLYVYGEDM…VQLKVNIARK (71 aa)) constitute an RRM domain. A phosphothreonine mark is found at threonine 272 and threonine 274. A phosphoserine mark is found at serine 281 and serine 353. Position 374 is a polyADP-ribosyl glutamic acid (glutamate 374).

This sequence belongs to the RRM NELF-E family. The NELF complex is composed of NELFA, NELFB, NELFCD (isoform NELF-C or isoform NELF-D) and NELFE. Interacts with NELFB. As to quaternary structure, (Microbial infection) Binds to the HIV-1 TAR RNA which is located in the long terminal repeat (LTR) of HIV-1. In terms of processing, phosphorylated by the P-TEFb complex at sites next to its RNA recognition motif, promoting its release from chromatin. Post-translationally, sumoylated. Poly-ADP-ribosylated by PARP1, thereby preventing RNA-binding and relieving transcription pausing. Widely expressed. Expressed in heart, brain, lung, placenta, liver, skeletal muscle, kidney and pancreas.

Its subcellular location is the nucleus. It localises to the chromosome. Its function is as follows. Essential component of the NELF complex, a complex that negatively regulates the elongation of transcription by RNA polymerase II. The NELF complex, which acts via an association with the DSIF complex and causes transcriptional pausing, is counteracted by the P-TEFb kinase complex. Provides the strongest RNA binding activity of the NELF complex and may initially recruit the NELF complex to RNA. Functionally, (Microbial infection) The NELF complex is involved in HIV-1 latency possibly involving recruitment of PCF11 to paused RNA polymerase II. In Homo sapiens (Human), this protein is Negative elongation factor E (NELFE).